Reading from the N-terminus, the 597-residue chain is MCGAKSNLCSSKTLTEVEFMRQKSEDGASATCLLEFAACDDLSSFKREIEENPSVEIDESGFWYCRRVGSKKMGFEERTPLMVAAMYGSMEVLNYIIATGRSDVNRVCSDEKVTALHCAVSGCSVSIVEIIKILLDASASPNCVDANGNKPVDLLAKDSRFVPNQSRKAVEVLLTGIHGSVMEEEEEELKSVVTKYPADASLPDINEGVYGTDDFRMFSFKVKPCSRAYSHDWTECPFVHPGENARRRDPRKYPYTCVPCPEFRKGSCPKGDSCEYAHGVFESWLHPAQYRTRLCKDETGCARRVCFFAHRRDELRPVNASTGSAMVSPRSSNQSPEMSVMSPLTLGSSPMNSPMANGVPLSPRNGGLWQNRVNSLTPPPLQLNGSRLKSTLSARDMDMEMELRFRGLDNRRLGDLKPSNLEETFGSYDSASVMQLQSPSRHSQMNHYPSSPVRQPPPHGFESSAAMAAAVMNARSSAFAKRSLSFKPAPVASNVSDWGSPNGKLEWGMQRDELNKLRRSASFGIHGNNNNSVSRPARDYSDEPDVSWVNSLVKENAPERVNERVGNTVNGAASRDKFKLPSWAEQMYIDHEQQIVA.

ANK repeat units follow at residues 76 to 106 (EERT…DVNR) and 111 to 143 (EKVT…SPNC). 2 C3H1-type zinc fingers span residues 254-281 (PYTC…HGVF) and 289-313 (QYRT…HRRD). Polar residues predominate over residues 320–337 (ASTGSAMVSPRSSNQSPE). Positions 320–341 (ASTGSAMVSPRSSNQSPEMSVM) are disordered.

As to expression, expressed in roots and anthers.

The protein localises to the nucleus. Its function is as follows. Involved in salt stress response. May positively modulate plant tolerance to salt stress. The protein is Zinc finger CCCH domain-containing protein 29 of Arabidopsis thaliana (Mouse-ear cress).